The following is a 399-amino-acid chain: Tryptophan synthase beta chain (399 aa).

The residue at position 92 (K92) is an N6-(pyridoxal phosphate)lysine.

The protein belongs to the TrpB family. In terms of assembly, tetramer of two alpha and two beta chains. Pyridoxal 5'-phosphate is required as a cofactor.

It catalyses the reaction (1S,2R)-1-C-(indol-3-yl)glycerol 3-phosphate + L-serine = D-glyceraldehyde 3-phosphate + L-tryptophan + H2O. Its pathway is amino-acid biosynthesis; L-tryptophan biosynthesis; L-tryptophan from chorismate: step 5/5. Its function is as follows. The beta subunit is responsible for the synthesis of L-tryptophan from indole and L-serine. The sequence is that of Tryptophan synthase beta chain from Bordetella petrii (strain ATCC BAA-461 / DSM 12804 / CCUG 43448).